The primary structure comprises 248 residues: Membrane-spanning 4-domains subfamily A member 6A (248 aa).

At 1-46 (MTSQPVPNETIIVLPSNVINFSQAEKPEPTNQGQDSLKKHLHAEIK) the chain is on the cytoplasmic side. Residues 47-67 (VIGTIQILCGMMVLSLGIILA) traverse the membrane as a helical segment. Residues 68–84 (SASFSPNFTQVTSTLLN) lie on the Extracellular side of the membrane. The chain crosses the membrane as a helical span at residues 85–105 (SAYPFIGPFFFIISGSLSIAT). At 106–116 (EKRLTKLLVHS) the chain is on the cytoplasmic side. Residues 117-137 (SLVGSILSALSALVGFIILSV) form a helical membrane-spanning segment. Over 138–185 (KQATLNPASLQCELDKNNIPTRSYVSYFYHDSLYTTDCYTAKASLAGT) the chain is Extracellular. A helical membrane pass occupies residues 186 to 206 (LSLMLICTLLEFCLAVLTAVL). Topologically, residues 207-248 (RWKQAYSDFPGSVLFLPHSYIGNSGMSSKMTHDCGYEELLTS) are cytoplasmic.

The protein belongs to the MS4A family. In terms of tissue distribution, variable expression in some B-cell, myelomonocytic, and erythroleukemia cell lines.

The protein resides in the membrane. May be involved in signal transduction as a component of a multimeric receptor complex. The sequence is that of Membrane-spanning 4-domains subfamily A member 6A (MS4A6A) from Homo sapiens (Human).